Reading from the N-terminus, the 273-residue chain is 4-hydroxy-tetrahydrodipicolinate reductase (273 aa).

Residues 12–17 (GAGGRM) and glutamate 38 contribute to the NAD(+) site. Arginine 39 serves as a coordination point for NADP(+). Residues 102-104 (GTT) and 126-129 (AANF) contribute to the NAD(+) site. Residue histidine 159 is the Proton donor/acceptor of the active site. Residue histidine 160 participates in (S)-2,3,4,5-tetrahydrodipicolinate binding. Lysine 163 functions as the Proton donor in the catalytic mechanism. (S)-2,3,4,5-tetrahydrodipicolinate is bound at residue 169 to 170 (GT).

The protein belongs to the DapB family. In terms of assembly, homotetramer.

Its subcellular location is the cytoplasm. The catalysed reaction is (S)-2,3,4,5-tetrahydrodipicolinate + NAD(+) + H2O = (2S,4S)-4-hydroxy-2,3,4,5-tetrahydrodipicolinate + NADH + H(+). It carries out the reaction (S)-2,3,4,5-tetrahydrodipicolinate + NADP(+) + H2O = (2S,4S)-4-hydroxy-2,3,4,5-tetrahydrodipicolinate + NADPH + H(+). Its pathway is amino-acid biosynthesis; L-lysine biosynthesis via DAP pathway; (S)-tetrahydrodipicolinate from L-aspartate: step 4/4. Catalyzes the conversion of 4-hydroxy-tetrahydrodipicolinate (HTPA) to tetrahydrodipicolinate. The polypeptide is 4-hydroxy-tetrahydrodipicolinate reductase (Enterobacter sp. (strain 638)).